The primary structure comprises 730 residues: Elongation factor 2 (730 aa).

Positions 19 to 260 constitute a tr-type G domain; the sequence is KFIRNIGIVA…MVVKHLPDPF (242 aa). Residues 28-35, 94-98, and 148-151 each bind GTP; these read AHIDHGKT, DTPGH, and NKVD. H597 is modified (diphthamide).

Belongs to the TRAFAC class translation factor GTPase superfamily. Classic translation factor GTPase family. EF-G/EF-2 subfamily.

The protein localises to the cytoplasm. Its function is as follows. Catalyzes the GTP-dependent ribosomal translocation step during translation elongation. During this step, the ribosome changes from the pre-translocational (PRE) to the post-translocational (POST) state as the newly formed A-site-bound peptidyl-tRNA and P-site-bound deacylated tRNA move to the P and E sites, respectively. Catalyzes the coordinated movement of the two tRNA molecules, the mRNA and conformational changes in the ribosome. The protein is Elongation factor 2 of Methanosphaerula palustris (strain ATCC BAA-1556 / DSM 19958 / E1-9c).